The following is a 451-amino-acid chain: POU domain, class 3, transcription factor 1 (451 aa).

5 disordered regions span residues Met1–Pro21, Ala69–Ala114, Ala127–Gln154, Gly186–Asp253, and Lys395–Gln451. 3 stretches are compositionally biased toward gly residues: residues Gly11–Gly20, Thr76–Ala85, and Ala95–Phe112. Positions Ala190 to Gln199 are enriched in basic and acidic residues. Positions Ala220 to Pro232 are enriched in low complexity. In terms of domain architecture, POU-specific spans Glu247–Asp321. The homeobox DNA-binding region spans Lys339 to Thr398. Residues Pro427–Ala436 show a composition bias toward pro residues.

This sequence belongs to the POU transcription factor family. Class-3 subfamily. As to expression, expressed in embryonal stem cells and in the developing brain.

It localises to the nucleus. Transcription factor that binds to the octamer motif (5'-ATTTGCAT-3'). Acts as a transcriptional activator when binding cooperatively with SOX4, SOX11, or SOX12 to gene promoters. Acts as a transcriptional repressor of myelin-specific genes. This Homo sapiens (Human) protein is POU domain, class 3, transcription factor 1 (POU3F1).